Reading from the N-terminus, the 734-residue chain is Photosystem I P700 chlorophyll a apoprotein A2 (734 aa).

Helical transmembrane passes span 46-69, 135-158, 175-199, 273-291, 330-353, 369-395, 417-439, and 517-535; these read IFAS…FHVA, LYTG…LHLQ, LNHH…HVAI, MAHH…GHMY, IHFQ…QHMY, AALY…IFFI, AIIS…LYVH, and FLVH…LILV. [4Fe-4S] cluster-binding residues include Cys-559 and Cys-568. Helical transmembrane passes span 575–596 and 643–665; these read AFYL…YWHW and LSVW…MFLI. Chlorophyll a contacts are provided by His-654, Met-662, and Tyr-670. Phylloquinone is bound at residue Trp-671. The chain crosses the membrane as a helical span at residues 707–727; that stretch reads LVGLAHFSVGYIFTYAAFLIA.

It belongs to the PsaA/PsaB family. In terms of assembly, the PsaA/B heterodimer binds the P700 chlorophyll special pair and subsequent electron acceptors. PSI consists of a core antenna complex that captures photons, and an electron transfer chain that converts photonic excitation into a charge separation. The eukaryotic PSI reaction center is composed of at least 11 subunits. P700 is a chlorophyll a/chlorophyll a' dimer, A0 is one or more chlorophyll a, A1 is one or both phylloquinones and FX is a shared 4Fe-4S iron-sulfur center. serves as cofactor.

The protein localises to the plastid. It is found in the chloroplast thylakoid membrane. It carries out the reaction reduced [plastocyanin] + hnu + oxidized [2Fe-2S]-[ferredoxin] = oxidized [plastocyanin] + reduced [2Fe-2S]-[ferredoxin]. PsaA and PsaB bind P700, the primary electron donor of photosystem I (PSI), as well as the electron acceptors A0, A1 and FX. PSI is a plastocyanin-ferredoxin oxidoreductase, converting photonic excitation into a charge separation, which transfers an electron from the donor P700 chlorophyll pair to the spectroscopically characterized acceptors A0, A1, FX, FA and FB in turn. Oxidized P700 is reduced on the lumenal side of the thylakoid membrane by plastocyanin. The chain is Photosystem I P700 chlorophyll a apoprotein A2 from Hordeum vulgare (Barley).